The following is a 352-amino-acid chain: Divinyl chlorophyll a/b light-harvesting protein PcbA (352 aa).

The next 6 membrane-spanning stretches (helical) occupy residues 27-47 (FIAA…AFTL), 90-110 (VLAI…GGLL), 142-162 (FILG…VEWA), 203-223 (VMGG…WHIA), 243-263 (AVLS…AFWS), and 306-326 (LANV…WHAL).

The protein belongs to the PsbB/PsbC family. IsiA/Pcb subfamily. As to quaternary structure, the antenna complex consists of divinyl chlorophylls (a and b) and divinyl chlorophyll a/b binding proteins and binds less divinyl chlorophyll b than does low-light-adapted Prochlorococcus. Also forms complexes with PSII, consisting of a PSII dimer and 4 or 8 PcbA subunits. These complexes are also found under conditions of iron-starvation. Requires divinyl chlorophyll a as cofactor. It depends on divinyl chlorophyll b as a cofactor.

The protein resides in the cellular thylakoid membrane. The antenna complex functions as a light receptor, it captures and delivers excitation energy to photosystem II and possibly to photosystem I. The Prochlorales pcb genes are not related to higher plant LHCs. In Prochlorococcus marinus subsp. pastoris (strain CCMP1986 / NIES-2087 / MED4), this protein is Divinyl chlorophyll a/b light-harvesting protein PcbA (pcbA).